The primary structure comprises 427 residues: Glutamate-1-semialdehyde 2,1-aminomutase (427 aa).

Lys265 carries the N6-(pyridoxal phosphate)lysine modification.

Belongs to the class-III pyridoxal-phosphate-dependent aminotransferase family. HemL subfamily. In terms of assembly, homodimer. Pyridoxal 5'-phosphate is required as a cofactor.

It is found in the cytoplasm. The catalysed reaction is (S)-4-amino-5-oxopentanoate = 5-aminolevulinate. It functions in the pathway porphyrin-containing compound metabolism; protoporphyrin-IX biosynthesis; 5-aminolevulinate from L-glutamyl-tRNA(Glu): step 2/2. The polypeptide is Glutamate-1-semialdehyde 2,1-aminomutase (Stutzerimonas stutzeri (strain A1501) (Pseudomonas stutzeri)).